The following is a 276-amino-acid chain: Elongation factor Ts (276 aa).

The tract at residues 76–79 is involved in Mg(2+) ion dislocation from EF-Tu; sequence TDFV.

The protein belongs to the EF-Ts family.

The protein localises to the cytoplasm. In terms of biological role, associates with the EF-Tu.GDP complex and induces the exchange of GDP to GTP. It remains bound to the aminoacyl-tRNA.EF-Tu.GTP complex up to the GTP hydrolysis stage on the ribosome. This Mycobacterium leprae (strain Br4923) protein is Elongation factor Ts.